The sequence spans 287 residues: Putative sugar uptake protein M6_Spy1874 (287 aa).

The next 10 helical transmembrane spans lie at 4-26 (IFYALIPMFTWGSIGFVSNKIGG), 33-50 (LGMTFGALLFSLAVWLIV), 55-72 (TLQLWLFGILGGFIWSIG), 85-107 (VSVANPLSSGSQLVLGSLIGVLV), 117-134 (FVVGSLALLLLIIGFYFS), 154-171 (FRALTYSTIGYVMYAVLF), 181-200 (SVILPMAVGMVLGAITFMSF), 207-229 (YVIKNSVVGLLWGIGNIFMLLAA), 234-256 (LAIAFSFSQLGAIISIVGGILFL), and 268-285 (VVTGIICFIVGAILLGVV).

It belongs to the GRP transporter (TC 2.A.7.5) family.

It localises to the cell membrane. This Streptococcus pyogenes serotype M6 (strain ATCC BAA-946 / MGAS10394) protein is Putative sugar uptake protein M6_Spy1874.